The following is a 732-amino-acid chain: Inducible ornithine decarboxylase (732 aa).

An N6-(pyridoxal phosphate)lysine modification is found at K355.

Belongs to the Orn/Lys/Arg decarboxylase class-I family. The cofactor is pyridoxal 5'-phosphate.

It carries out the reaction L-ornithine + H(+) = putrescine + CO2. It participates in amine and polyamine biosynthesis; putrescine biosynthesis via L-ornithine pathway; putrescine from L-ornithine: step 1/1. In terms of biological role, the first enzyme leading to putrescine and thus polyamine synthesis. In Escherichia coli (strain K12), this protein is Inducible ornithine decarboxylase.